The primary structure comprises 246 residues: 4-hydroxy-tetrahydrodipicolinate reductase (246 aa).

Residues 7-12, 84-86, and 108-111 each bind NAD(+); these read GATGRT, GTT, and ASNF. His-140 acts as the Proton donor/acceptor in catalysis. His-141 provides a ligand contact to (S)-2,3,4,5-tetrahydrodipicolinate. Catalysis depends on Lys-144, which acts as the Proton donor. 150–151 contacts (S)-2,3,4,5-tetrahydrodipicolinate; the sequence is GT.

Belongs to the DapB family.

The protein localises to the cytoplasm. The enzyme catalyses (S)-2,3,4,5-tetrahydrodipicolinate + NAD(+) + H2O = (2S,4S)-4-hydroxy-2,3,4,5-tetrahydrodipicolinate + NADH + H(+). It catalyses the reaction (S)-2,3,4,5-tetrahydrodipicolinate + NADP(+) + H2O = (2S,4S)-4-hydroxy-2,3,4,5-tetrahydrodipicolinate + NADPH + H(+). The protein operates within amino-acid biosynthesis; L-lysine biosynthesis via DAP pathway; (S)-tetrahydrodipicolinate from L-aspartate: step 4/4. Functionally, catalyzes the conversion of 4-hydroxy-tetrahydrodipicolinate (HTPA) to tetrahydrodipicolinate. The polypeptide is 4-hydroxy-tetrahydrodipicolinate reductase (Natronomonas pharaonis (strain ATCC 35678 / DSM 2160 / CIP 103997 / JCM 8858 / NBRC 14720 / NCIMB 2260 / Gabara) (Halobacterium pharaonis)).